Reading from the N-terminus, the 222-residue chain is Probable transaldolase (222 aa).

Catalysis depends on lysine 91, which acts as the Schiff-base intermediate with substrate.

Belongs to the transaldolase family. Type 3B subfamily.

It is found in the cytoplasm. The enzyme catalyses D-sedoheptulose 7-phosphate + D-glyceraldehyde 3-phosphate = D-erythrose 4-phosphate + beta-D-fructose 6-phosphate. The protein operates within carbohydrate degradation; pentose phosphate pathway; D-glyceraldehyde 3-phosphate and beta-D-fructose 6-phosphate from D-ribose 5-phosphate and D-xylulose 5-phosphate (non-oxidative stage): step 2/3. Its function is as follows. Transaldolase is important for the balance of metabolites in the pentose-phosphate pathway. In Chlorobium limicola (strain DSM 245 / NBRC 103803 / 6330), this protein is Probable transaldolase.